Reading from the N-terminus, the 286-residue chain is F-box/SPRY domain-containing protein 1 (286 aa).

An N-acetylalanine modification is found at A2. The F-box domain maps to 33 to 82; the sequence is AGAGGRLPSRVLELVFSYLELSELRSCALVCKHWYRCLHGDENSEVWRSL. Positions 92–284 constitute a B30.2/SPRY domain; the sequence is LRTDILCNLP…VTLVYLGKPL (193 aa).

The protein belongs to the FBXO45/Fsn family. As to quaternary structure, forms a complex with MYCBP2 and SKP1. Interacts with HEY1; leading to FBXO45 nuclear translocation. Interacts (via SPRY domain) with CDH2.

It localises to the secreted. It is found in the postsynaptic cell membrane. The protein localises to the presynaptic cell membrane. The protein resides in the nucleus. Its pathway is protein modification; protein ubiquitination. Functionally, component of E3 ubiquitin ligase complex consisting of FBXO45, MYCBP2 and SKP1. Functions in substrate recognition but also plays an important role in assembly of the complex. Required for normal neuromuscular synaptogenesis, axon pathfinding and neuronal migration. Regulates neuron migration during brain development through interaction with N-cadherin/CDH2 after secretion via a non-classical mechanism. Plays a role in the regulation of neurotransmission at mature neurons. May control synaptic activity by controlling UNC13A via ubiquitin dependent pathway. Specifically recognizes TP73, promoting its ubiquitination and degradation. Polyubiquitinates NMNAT2, an adenylyltransferase that acts as an axon maintenance factor, and regulates its stability and degradation by the proteasome. Also acts by ubiquitinating FBXW7 during prolonged mitotic arrest and promotes FBXW7 proteasomal degradation. Induces subsequently an increase in mitotic slippage and prevents mitotic cell death. In response to influenza infection, mediates interferon-lambda receptor IFNLR1 polyubiquitination and degradation through the ubiquitin-proteasome system by docking with its intracellular receptor domain. In Homo sapiens (Human), this protein is F-box/SPRY domain-containing protein 1 (FBXO45).